A 199-amino-acid polypeptide reads, in one-letter code: Charged multivesicular body protein 1B1 (199 aa).

The stretch at 10-48 (NLKFAAKELNRSSKKCDKEEKAEKAKIKKAIQKGNMEVA) forms a coiled coil. Residues 132 to 156 (MEDTMSSTTTLTTPQNQVDMLLQEM) are interaction with IST1. The segment at 167-199 (ELPQGQTGSVGTSVASAEQDELSQRLARLRDQV) is disordered. Over residues 170–182 (QGQTGSVGTSVAS) the composition is skewed to polar residues. The interval 174-199 (GSVGTSVASAEQDELSQRLARLRDQV) is interaction with SPAST. Positions 178-199 (TSVASAEQDELSQRLARLRDQV) form a coiled coil. Positions 180–196 (VASAEQDELSQRLARLR) are interaction with VPS4A, MITD1 and STAMBP. Residues 180-199 (VASAEQDELSQRLARLRDQV) are interaction with VTA1. Residues 183–199 (AEQDELSQRLARLRDQV) form an interaction with VPS4B region. The MIT-interacting motif signature appears at 186–196 (DELSQRLARLR).

The protein belongs to the SNF7 family. Probable peripherally associated component of the endosomal sorting required for transport complex III (ESCRT-III). ESCRT-III components are thought to multimerize to form a flat lattice on the perimeter membrane of the endosome. Several assembly forms of ESCRT-III may exist that interact and act sequentially. Interacts with CHMP1A. Interacts with VTA1; the interaction probably involves the open conformation of CHMP1B. Interacts with CHMP2A. Interacts with VPS4A; the interaction is direct. Interacts with VPS4B; the interaction is direct. Interacts with SPAST (via MIT domain); the interaction is direct. Interacts with IST1. Interacts with MITD1. Interacts with STAMBP.

The protein resides in the cytoplasm. It is found in the cytosol. The protein localises to the endosome. Its subcellular location is the late endosome membrane. Probable peripherally associated component of the endosomal sorting required for transport complex III (ESCRT-III) which is involved in multivesicular bodies (MVBs) formation and sorting of endosomal cargo proteins into MVBs. MVBs contain intraluminal vesicles (ILVs) that are generated by invagination and scission from the limiting membrane of the endosome and mostly are delivered to lysosomes enabling degradation of membrane proteins, such as stimulated growth factor receptors, lysosomal enzymes and lipids. The MVB pathway appears to require the sequential function of ESCRT-O, -I,-II and -III complexes. ESCRT-III proteins mostly dissociate from the invaginating membrane before the ILV is released. The ESCRT machinery also functions in topologically equivalent membrane fission events, such as the terminal stages of cytokinesis. ESCRT-III proteins are believed to mediate the necessary vesicle extrusion and/or membrane fission activities, possibly in conjunction with the AAA ATPase VPS4. Involved in cytokinesis. Involved in recruiting VPS4A and/or VPS4B and SPAST to the midbody of dividing cells. The sequence is that of Charged multivesicular body protein 1B1 from Mus musculus (Mouse).